The sequence spans 214 residues: Probable transaldolase (214 aa).

K83 (schiff-base intermediate with substrate) is an active-site residue.

The protein belongs to the transaldolase family. Type 3B subfamily.

Its subcellular location is the cytoplasm. The enzyme catalyses D-sedoheptulose 7-phosphate + D-glyceraldehyde 3-phosphate = D-erythrose 4-phosphate + beta-D-fructose 6-phosphate. It functions in the pathway carbohydrate degradation; pentose phosphate pathway; D-glyceraldehyde 3-phosphate and beta-D-fructose 6-phosphate from D-ribose 5-phosphate and D-xylulose 5-phosphate (non-oxidative stage): step 2/3. Its function is as follows. Transaldolase is important for the balance of metabolites in the pentose-phosphate pathway. This chain is Probable transaldolase, found in Streptococcus equi subsp. zooepidemicus (strain H70).